Reading from the N-terminus, the 280-residue chain is MALYCIGDIQGCDAALQRLLDTVDFSPSRDTVYLLGDLVNRGPQSAEVLRRCARGGDSLRALLGNHDLHLLAAAHGARKPSRRDTLAGVLQAPDRDALLDWLKRQPLAREHRLAGERLLMVHAGVLPSWTADATLEHAAEVQARLQGDALPEFLQAMYGNAPDRWSDELSGMDRWRAIVNALTRLRFCTPDGRMDFDSSEAADAAPDGLVPWFDAPGRRTRGTLVAFGHWSTLGWMNRPDLLALDTGCVWGGCLSAVRFGATLAEREHISVRCEQAQAPG.

This sequence belongs to the Ap4A hydrolase family.

It carries out the reaction P(1),P(4)-bis(5'-adenosyl) tetraphosphate + H2O = 2 ADP + 2 H(+). Its function is as follows. Hydrolyzes diadenosine 5',5'''-P1,P4-tetraphosphate to yield ADP. The sequence is that of Bis(5'-nucleosyl)-tetraphosphatase, symmetrical from Paracidovorax citrulli (strain AAC00-1) (Acidovorax citrulli).